A 555-amino-acid chain; its full sequence is Glypican-6 (555 aa).

Positions 1–23 (MPSWIRAVILPLSGLLLTLPAAA) are cleaved as a signal peptide. Positions 348-357 (PALRSARSAP) are enriched in low complexity. 2 disordered regions span residues 348 to 376 (PALR…PTTA) and 480 to 501 (GNDV…GSGC). S530 is lipidated: GPI-anchor amidated serine. Residues 531–555 (ASKFSSSLISWSLVCMVLALQRLYR) constitute a propeptide, removed in mature form.

Belongs to the glypican family. In terms of tissue distribution, in the cartilage growth-plate, gradient of expression with highest levels from the proliferative and pre-hypertrophic zones to lowest, if any, in the hypertrophic zones (at protein level).

It localises to the cell membrane. Its subcellular location is the secreted. The protein resides in the extracellular space. Cell surface proteoglycan that bears heparan sulfate. Putative cell surface coreceptor for growth factors, extracellular matrix proteins, proteases and anti-proteases. Enhances migration and invasion of cancer cells through WNT5A signaling. The chain is Glypican-6 (Gpc6) from Mus musculus (Mouse).